Here is an 87-residue protein sequence, read N- to C-terminus: UPF0367 protein Pro_0144 (87 aa).

The protein belongs to the UPF0367 family.

This chain is UPF0367 protein Pro_0144, found in Prochlorococcus marinus (strain SARG / CCMP1375 / SS120).